The following is a 166-amino-acid chain: Deglycase TK1284 (166 aa).

Residues 1–166 (MKVLILSADG…WMREFVKLLR (166 aa)) enclose the PfpI endopeptidase domain. The active site involves His-101.

It belongs to the peptidase C56 family. As to quaternary structure, homohexamer formed by a dimer of trimers that assemble into a hollow ring structure.

It localises to the cytoplasm. It catalyses the reaction N(omega)-(1-hydroxy-2-oxopropyl)-L-arginyl-[protein] + H2O = lactate + L-arginyl-[protein] + H(+). It carries out the reaction N(6)-(1-hydroxy-2-oxopropyl)-L-lysyl-[protein] + H2O = lactate + L-lysyl-[protein] + H(+). The enzyme catalyses S-(1-hydroxy-2-oxopropyl)-L-cysteinyl-[protein] + H2O = lactate + L-cysteinyl-[protein] + H(+). The catalysed reaction is N(omega)-(1-hydroxy-2-oxoethyl)-L-arginyl-[protein] + H2O = L-arginyl-[protein] + glycolate + H(+). It catalyses the reaction N(6)-(1-hydroxy-2-oxoethyl)-L-lysyl-[protein] + H2O = glycolate + L-lysyl-[protein] + H(+). It carries out the reaction S-(1-hydroxy-2-oxoethyl)-L-cysteinyl-[protein] + H2O = glycolate + L-cysteinyl-[protein] + H(+). Its function is as follows. Deglycase that catalyzes the deglycation of the Maillard adducts formed between amino groups of proteins and reactive carbonyl groups of glyoxals. Thus, functions as a protein deglycase that repairs methylglyoxal- and glyoxal-glycated proteins, and releases repaired proteins and lactate or glycolate, respectively. Deglycates cysteine, arginine and lysine residues in proteins, and thus reactivates these proteins by reversing glycation by glyoxals. Acts on early glycation intermediates (hemithioacetals and aminocarbinols), preventing the formation of advanced glycation endproducts (AGE) that cause irreversible damage. Also displays proteolytic activity. The sequence is that of Deglycase TK1284 from Thermococcus kodakarensis (strain ATCC BAA-918 / JCM 12380 / KOD1) (Pyrococcus kodakaraensis (strain KOD1)).